The chain runs to 628 residues: Kinesin-like protein KIN-10B (628 aa).

The region spanning 20–340 is the Kinesin motor domain; the sequence is NVRVVLRVRP…VSLAARSRHI (321 aa). Residue 114–121 participates in ATP binding; that stretch reads GATGSGKT. Residues 496–519 form a disordered region; the sequence is SPIDSNAKPNSAHGSSPFLKPMTP. Residues 498-509 are compositionally biased toward polar residues; sequence IDSNAKPNSAHG.

Belongs to the TRAFAC class myosin-kinesin ATPase superfamily. Kinesin family. KIN-10 subfamily.

The sequence is that of Kinesin-like protein KIN-10B from Arabidopsis thaliana (Mouse-ear cress).